The sequence spans 288 residues: Bifunctional protein FolD (288 aa).

Residues G166–S168 and I232 contribute to the NADP(+) site.

This sequence belongs to the tetrahydrofolate dehydrogenase/cyclohydrolase family. In terms of assembly, homodimer.

The catalysed reaction is (6R)-5,10-methylene-5,6,7,8-tetrahydrofolate + NADP(+) = (6R)-5,10-methenyltetrahydrofolate + NADPH. It carries out the reaction (6R)-5,10-methenyltetrahydrofolate + H2O = (6R)-10-formyltetrahydrofolate + H(+). It functions in the pathway one-carbon metabolism; tetrahydrofolate interconversion. Its function is as follows. Catalyzes the oxidation of 5,10-methylenetetrahydrofolate to 5,10-methenyltetrahydrofolate and then the hydrolysis of 5,10-methenyltetrahydrofolate to 10-formyltetrahydrofolate. This Escherichia coli (strain SMS-3-5 / SECEC) protein is Bifunctional protein FolD.